The following is a 125-amino-acid chain: Small ribosomal subunit protein uS12c (125 aa).

This sequence belongs to the universal ribosomal protein uS12 family. Part of the 30S ribosomal subunit.

The protein localises to the plastid. Its subcellular location is the chloroplast. In terms of biological role, with S4 and S5 plays an important role in translational accuracy. Located at the interface of the 30S and 50S subunits. This Nephroselmis olivacea (Green alga) protein is Small ribosomal subunit protein uS12c (rps12).